Consider the following 252-residue polypeptide: 5'-nucleotidase SurE (252 aa).

A divalent metal cation contacts are provided by Asp-8, Asp-9, Ser-39, and Asn-95.

The protein belongs to the SurE nucleotidase family. A divalent metal cation is required as a cofactor.

The protein resides in the cytoplasm. The catalysed reaction is a ribonucleoside 5'-phosphate + H2O = a ribonucleoside + phosphate. Nucleotidase that shows phosphatase activity on nucleoside 5'-monophosphates. This chain is 5'-nucleotidase SurE, found in Clostridium botulinum (strain ATCC 19397 / Type A).